The primary structure comprises 558 residues: Ribonuclease J (558 aa).

His81, His83, Asp85, His86, His148, and Asp170 together coordinate Zn(2+). 371 to 375 contacts substrate; that stretch reads HVSGH. A Zn(2+)-binding site is contributed by His397.

This sequence belongs to the metallo-beta-lactamase superfamily. RNA-metabolizing metallo-beta-lactamase-like family. Bacterial RNase J subfamily. Homodimer, may be a subunit of the RNA degradosome. It depends on Zn(2+) as a cofactor.

The protein resides in the cytoplasm. An RNase that has 5'-3' exonuclease and possibly endoonuclease activity. Involved in maturation of rRNA and in some organisms also mRNA maturation and/or decay. The protein is Ribonuclease J of Mycobacterium tuberculosis (strain CDC 1551 / Oshkosh).